We begin with the raw amino-acid sequence, 229 residues long: Orotidine 5'-phosphate decarboxylase (229 aa).

Substrate-binding positions include D10, K32, 59 to 68 (DLKFHDIPNT), T119, R180, Q189, G209, and R210. K61 acts as the Proton donor in catalysis.

The protein belongs to the OMP decarboxylase family. Type 1 subfamily. Homodimer.

The catalysed reaction is orotidine 5'-phosphate + H(+) = UMP + CO2. The protein operates within pyrimidine metabolism; UMP biosynthesis via de novo pathway; UMP from orotate: step 2/2. Functionally, catalyzes the decarboxylation of orotidine 5'-monophosphate (OMP) to uridine 5'-monophosphate (UMP). The polypeptide is Orotidine 5'-phosphate decarboxylase (Legionella pneumophila (strain Paris)).